We begin with the raw amino-acid sequence, 235 residues long: Large ribosomal subunit protein uL1 (235 aa).

The protein belongs to the universal ribosomal protein uL1 family. As to quaternary structure, part of the 50S ribosomal subunit.

Functionally, binds directly to 23S rRNA. The L1 stalk is quite mobile in the ribosome, and is involved in E site tRNA release. Protein L1 is also a translational repressor protein, it controls the translation of the L11 operon by binding to its mRNA. This is Large ribosomal subunit protein uL1 from Mycobacterium tuberculosis (strain ATCC 25177 / H37Ra).